Here is a 645-residue protein sequence, read N- to C-terminus: MAEAAAGEAGASERDPDAGRARRRLRVLSGHLLGRPQEAPSTNECKARRAASAAGASPAATPAAPESGTIPKKRQEVMKWNGWGYNDSKFLLNKKGQVELTGKRYPLSGLVLPTLRDWIQNTLGVSLEHKTTSKTSINPSEAPPSIVNEDFLQELKEARISYSQEADDRVFRAHGHCLHEIFLLREGMFERIPDIVVWPTCHDDVVKIVNLACKYNLCIIPIGGGTSVSYGLMCPADETRTIISLDTSQMNRILWVDENNLTAHVEAGITGQDLERQLKESGYCTGHEPDSLEFSTVGGWISTRASGMKKNIYGNIEDLVVHMKMVTPRGVIEKSSQGPRMSTGPDIHHFIMGSEGTLGVITEATIKIRPTPEYQKYGSVAFPNFEQGVACLREIAKQRCAPASIRLMDNQQFQFGHALKPQVSSIFTSFLDGLKKFYITKFKGFDPNQISVATLLFEGDREKVLQHEKQVYDIAAKFGGLAAGEDNGQRGYLLTYVIAYIRDLGLEYYVIGESFETSAPWDRVIDLCRNVKERIRRECKERGVQFAPLSTCRVTQTYDAGACIYFYFAFNYRGISDPLTVFEHTEAAAREEILANGGSLSHHHGVGKIRKQWLKESISDVGFGMLKSVKEYVDPSNIFGNRNLL.

Positions 1–10 are enriched in low complexity; it reads MAEAAAGEAG. A peroxisome-targeting transit peptide spans 1–45; that stretch reads MAEAAAGEAGASERDPDAGRARRRLRVLSGHLLGRPQEAPSTNEC. Positions 1–72 are disordered; that stretch reads MAEAAAGEAG…AAPESGTIPK (72 aa). A compositionally biased stretch (basic and acidic residues) spans 11–20; it reads ASERDPDAGR. The segment covering 50–69 has biased composition (low complexity); it reads AASAAGASPAATPAAPESGT. A phosphoserine mark is found at serine 52 and serine 57. Residue threonine 61 is modified to Phosphothreonine. N6-acetyllysine is present on lysine 89. The region spanning 189–371 is the FAD-binding PCMH-type domain; that stretch reads FERIPDIVVW…TEATIKIRPT (183 aa). Residues 221 to 227, 290 to 296, and 303 to 306 contribute to the FAD site; these read PIGGGTS, DSLEFST, and TRAS. Lysine 334 is subject to N6-acetyllysine. An FAD-binding site is contributed by 355 to 361; sequence EGTLGVI. Residue arginine 502 participates in substrate binding. Tyrosine 565 (proton donor/acceptor) is an active-site residue. 2 important for enzyme activity regions span residues 602-604 and 641-645; these read HHH and NRNLL.

The protein belongs to the FAD-binding oxidoreductase/transferase type 4 family. In terms of assembly, homodimer. Requires FAD as cofactor.

The protein localises to the peroxisome membrane. Its subcellular location is the peroxisome. It catalyses the reaction a long chain fatty alcohol + a 1-acylglycerone 3-phosphate = a 1-O-alkylglycerone 3-phosphate + a long-chain fatty acid + H(+). The enzyme catalyses hexadecan-1-ol + 1-hexadecanoylglycerone 3-phosphate = 1-O-hexadecylglycerone 3-phosphate + hexadecanoate + H(+). The catalysed reaction is 1-hexadecanoylglycerone 3-phosphate + a long-chain fatty acid = a 1-acylglycerone 3-phosphate + hexadecanoate. It functions in the pathway glycerolipid metabolism; ether lipid biosynthesis. Catalyzes the exchange of the acyl chain in acyl-dihydroxyacetonephosphate (acyl-DHAP) for a long chain fatty alcohol, yielding the first ether linked intermediate, i.e. alkyl-dihydroxyacetonephosphate (alkyl-DHAP), in the pathway of ether lipid biosynthesis. This chain is Alkyldihydroxyacetonephosphate synthase, peroxisomal (Agps), found in Mus musculus (Mouse).